The chain runs to 103 residues: Large ribosomal subunit protein bL21 (103 aa).

It belongs to the bacterial ribosomal protein bL21 family. In terms of assembly, part of the 50S ribosomal subunit. Contacts protein L20.

Functionally, this protein binds to 23S rRNA in the presence of protein L20. The protein is Large ribosomal subunit protein bL21 of Tolumonas auensis (strain DSM 9187 / NBRC 110442 / TA 4).